A 305-amino-acid chain; its full sequence is Aurasperone B biosynthesis cluster protein A (305 aa).

The signal sequence occupies residues 1–26 (MSIFFSIRFWPAAISAAILWLPQVLG). N-linked (GlcNAc...) asparagine glycosylation is found at asparagine 29, asparagine 34, asparagine 64, asparagine 83, asparagine 132, asparagine 183, asparagine 218, and asparagine 288.

This sequence belongs to the bfoA family.

Functionally, part of the gene cluster that mediates the biosynthesis of aurasperone B, a dimeric gamma-naphthopyrone. The first step in the biosynthesis of aurasperone B is the production of gamma-naphthopyrone precursor YWA1 by the non-reducing polyketide synthase albA, via condensation of one acetyl-CoA starter unit with 6 malonyl-CoA units. YWA1 is then methylated by aunE at position C-6 to yield foncesin which is further methylated at position C-8 by aunD to produce fonsecin B. A key enzyme in the biosynthetic pathway is the cytochrome P450 monooxygenase aunB which catalyzes the oxidative dimerization of fonsecin B to aurasperone B. AunB also catalyzes the oxidative dimerization of rubrofusarin B into aurasperone A. The chain is Aurasperone B biosynthesis cluster protein A from Aspergillus niger (strain ATCC 1015 / CBS 113.46 / FGSC A1144 / LSHB Ac4 / NCTC 3858a / NRRL 328 / USDA 3528.7).